Here is a 444-residue protein sequence, read N- to C-terminus: Tubulin beta-7 chain (444 aa).

GTP contacts are provided by Gln11, Glu69, Ser138, Gly142, Thr143, Gly144, Asn204, and Asn226. A Mg(2+)-binding site is contributed by Glu69.

Belongs to the tubulin family. In terms of assembly, dimer of alpha and beta chains. A typical microtubule is a hollow water-filled tube with an outer diameter of 25 nm and an inner diameter of 15 nM. Alpha-beta heterodimers associate head-to-tail to form protofilaments running lengthwise along the microtubule wall with the beta-tubulin subunit facing the microtubule plus end conferring a structural polarity. Microtubules usually have 13 protofilaments but different protofilament numbers can be found in some organisms and specialized cells. The cofactor is Mg(2+).

The protein localises to the cytoplasm. It is found in the cytoskeleton. Tubulin is the major constituent of microtubules, a cylinder consisting of laterally associated linear protofilaments composed of alpha- and beta-tubulin heterodimers. Microtubules grow by the addition of GTP-tubulin dimers to the microtubule end, where a stabilizing cap forms. Below the cap, tubulin dimers are in GDP-bound state, owing to GTPase activity of alpha-tubulin. In Gossypium hirsutum (Upland cotton), this protein is Tubulin beta-7 chain.